The sequence spans 281 residues: Ribosomal RNA small subunit methyltransferase A (281 aa).

S-adenosyl-L-methionine contacts are provided by Asn-36, Leu-38, Gly-63, Glu-84, Asp-109, and Asn-127.

Belongs to the class I-like SAM-binding methyltransferase superfamily. rRNA adenine N(6)-methyltransferase family. RsmA subfamily.

It localises to the cytoplasm. It catalyses the reaction adenosine(1518)/adenosine(1519) in 16S rRNA + 4 S-adenosyl-L-methionine = N(6)-dimethyladenosine(1518)/N(6)-dimethyladenosine(1519) in 16S rRNA + 4 S-adenosyl-L-homocysteine + 4 H(+). Functionally, specifically dimethylates two adjacent adenosines (A1518 and A1519) in the loop of a conserved hairpin near the 3'-end of 16S rRNA in the 30S particle. May play a critical role in biogenesis of 30S subunits. The sequence is that of Ribosomal RNA small subunit methyltransferase A from Borreliella afzelii (strain PKo) (Borrelia afzelii).